A 171-amino-acid chain; its full sequence is Small ribosomal subunit protein bS16 (171 aa).

The interval 114–171 is disordered; sequence EGGPTTEAAKPKKKAATSGAKKAAKAAEPEAAASEAAEPEAAAAPAEGGEQAESSAES. Positions 142-171 are enriched in low complexity; that stretch reads PEAAASEAAEPEAAAAPAEGGEQAESSAES.

The protein belongs to the bacterial ribosomal protein bS16 family.

This chain is Small ribosomal subunit protein bS16, found in Mycolicibacterium paratuberculosis (strain ATCC BAA-968 / K-10) (Mycobacterium paratuberculosis).